The following is a 126-amino-acid chain: uncharacterized protein (126 aa).

Residues 1–46 are disordered; the sequence is MREEEAAAVVTVPQAGRDGEQPGPPAGLGCAAVRGEPGGGGPQESR.

It is found in the cytoplasm. The protein resides in the cytoskeleton. The protein localises to the cilium basal body. This is an uncharacterized protein from Bos taurus (Bovine).